The primary structure comprises 725 residues: 1,4-alpha-glucan branching enzyme GlgB (725 aa).

Residue D406 is the Nucleophile of the active site. E459 (proton donor) is an active-site residue.

The protein belongs to the glycosyl hydrolase 13 family. GlgB subfamily. As to quaternary structure, monomer.

It carries out the reaction Transfers a segment of a (1-&gt;4)-alpha-D-glucan chain to a primary hydroxy group in a similar glucan chain.. Its pathway is glycan biosynthesis; glycogen biosynthesis. Its function is as follows. Catalyzes the formation of the alpha-1,6-glucosidic linkages in glycogen by scission of a 1,4-alpha-linked oligosaccharide from growing alpha-1,4-glucan chains and the subsequent attachment of the oligosaccharide to the alpha-1,6 position. This is 1,4-alpha-glucan branching enzyme GlgB from Methylobacillus flagellatus (strain ATCC 51484 / DSM 6875 / VKM B-1610 / KT).